Consider the following 237-residue polypeptide: Chloride intracellular channel protein 3 (237 aa).

The required for insertion into the membrane stretch occupies residues 1–89 (MAETTKLQLF…EEFLEETLGP (89 aa)). In terms of domain architecture, GST N-terminal spans 13 to 91 (ASEDGESVGH…FLEETLGPPD (79 aa)). Residues 23-26 (CPSC) carry the G-site motif. Cys23 and Cys26 form a disulfide bridge. The chain crosses the membrane as a helical span at residues 25–45 (SCQRLFMVLLLKGVPFTLTTV). Residues 69–236 (DGDVKTDTLQ…LAAYQPAVHP (168 aa)) form the GST C-terminal domain. Residue Ser160 is modified to Phosphoserine.

The protein belongs to the chloride channel CLIC family. As to quaternary structure, associated with the C-terminal of MAPK15.

It is found in the nucleus. The protein resides in the membrane. It localises to the cell membrane. The protein localises to the cytoplasm. Its subcellular location is the secreted. It is found in the extracellular space. The protein resides in the extracellular matrix. The enzyme catalyses chloride(in) = chloride(out). In terms of biological role, in the soluble state, catalyzes glutaredoxin-like thiol disulfide exchange reactions with reduced glutathione as electron donor. Reduced in a glutathione-dependent way and secreted into the extracellular matrix where it activates TGM2 and promotes blood vessel growth during tissue remodeling as occurs in tumorigenesis. Can reduce specific cysteines in TGM2 and regulate cofactor binding. Can insert into membranes and form outwardly rectifying chloride ion channels. May participate in cellular growth control. The sequence is that of Chloride intracellular channel protein 3 from Mus musculus (Mouse).